The chain runs to 186 residues: ATP-dependent protease subunit HslV (186 aa).

Thr-14 is an active-site residue. Residues Ala-168, Cys-171, and Thr-174 each coordinate Na(+).

The protein belongs to the peptidase T1B family. HslV subfamily. A double ring-shaped homohexamer of HslV is capped on each side by a ring-shaped HslU homohexamer. The assembly of the HslU/HslV complex is dependent on binding of ATP.

Its subcellular location is the cytoplasm. It catalyses the reaction ATP-dependent cleavage of peptide bonds with broad specificity.. With respect to regulation, allosterically activated by HslU binding. Protease subunit of a proteasome-like degradation complex believed to be a general protein degrading machinery. The polypeptide is ATP-dependent protease subunit HslV (Bradyrhizobium sp. (strain BTAi1 / ATCC BAA-1182)).